The sequence spans 76 residues: DNA-directed RNA polymerase subunit epsilon (76 aa).

It belongs to the RNA polymerase subunit epsilon family. In terms of assembly, RNAP is composed of a core of 2 alpha, a beta and a beta' subunit. The core is associated with a delta subunit, and at least one of epsilon or omega. When a sigma factor is associated with the core the holoenzyme is formed, which can initiate transcription.

It carries out the reaction RNA(n) + a ribonucleoside 5'-triphosphate = RNA(n+1) + diphosphate. Functionally, a non-essential component of RNA polymerase (RNAP). The protein is DNA-directed RNA polymerase subunit epsilon of Streptococcus equi subsp. equi (strain 4047).